The primary structure comprises 433 residues: Histidinol dehydrogenase homolog (433 aa).

Zn(2+) contacts are provided by Gln249 and His252. Catalysis depends on proton acceptor residues Glu319 and His320. Residues Asp353 and His412 each contribute to the Zn(2+) site.

The protein belongs to the histidinol dehydrogenase family. Zn(2+) is required as a cofactor.

The chain is Histidinol dehydrogenase homolog from Ruegeria pomeroyi (strain ATCC 700808 / DSM 15171 / DSS-3) (Silicibacter pomeroyi).